The primary structure comprises 119 residues: Immunoglobulin heavy variable 2-26 (119 aa).

A signal peptide spans 1 to 19 (MDTLCYTLLLLTTPSWVLS). Pyrrolidone carboxylic acid is present on Q20. The interval 20–44 (QVTLKESGPVLVKPTETLTLTCTVS) is framework-1. The region spanning 20–119 (QVTLKESGPV…DTATYYCARI (100 aa)) is the Ig-like domain. An intrachain disulfide couples C41 to C116. The segment at 45-54 (GFSLSNARMG) is complementarity-determining-1. The interval 55–71 (VSWIRQPPGKALEWLAH) is framework-2. Residues 72–78 (IFSNDEK) form a complementarity-determining-2 region. The tract at residues 79–116 (SYSTSLKSRLTISKDTSKSQVVLTMTNMDPVDTATYYC) is framework-3. The complementarity-determining-3 stretch occupies residues 117-119 (ARI).

Immunoglobulins are composed of two identical heavy chains and two identical light chains; disulfide-linked.

It localises to the secreted. Its subcellular location is the cell membrane. Its function is as follows. V region of the variable domain of immunoglobulin heavy chains that participates in the antigen recognition. Immunoglobulins, also known as antibodies, are membrane-bound or secreted glycoproteins produced by B lymphocytes. In the recognition phase of humoral immunity, the membrane-bound immunoglobulins serve as receptors which, upon binding of a specific antigen, trigger the clonal expansion and differentiation of B lymphocytes into immunoglobulins-secreting plasma cells. Secreted immunoglobulins mediate the effector phase of humoral immunity, which results in the elimination of bound antigens. The antigen binding site is formed by the variable domain of one heavy chain, together with that of its associated light chain. Thus, each immunoglobulin has two antigen binding sites with remarkable affinity for a particular antigen. The variable domains are assembled by a process called V-(D)-J rearrangement and can then be subjected to somatic hypermutations which, after exposure to antigen and selection, allow affinity maturation for a particular antigen. This chain is Immunoglobulin heavy variable 2-26, found in Homo sapiens (Human).